Consider the following 75-residue polypeptide: Small ribosomal subunit protein bS18 (75 aa).

The protein belongs to the bacterial ribosomal protein bS18 family. As to quaternary structure, part of the 30S ribosomal subunit. Forms a tight heterodimer with protein bS6.

Its function is as follows. Binds as a heterodimer with protein bS6 to the central domain of the 16S rRNA, where it helps stabilize the platform of the 30S subunit. The protein is Small ribosomal subunit protein bS18 of Psychromonas ingrahamii (strain DSM 17664 / CCUG 51855 / 37).